Here is a 577-residue protein sequence, read N- to C-terminus: MELAGFHCCSWTVILLSALLPTTWRPPAAAHFIHRADLLSNTQMERAPLAKLTLTVNQSTVTEQREMAVFYCNTNADNITIHWVSNNSLLVLNERMKLSADNKTLTILIVQREDSGSYLCEVQHGFEVQRSNTASLTVNYGPDPVSIKLDSGVAAGDVVEVMEGNTVNFRVEAQSSPVPAYAWYLPSDFIQPPTTGTFTIDAVSREHEGMYRCLVSNPVTNLSRLGVVKVQVLEKVTAPNIEFPTLALVENATSVTLTCKTSHQRVGVHWFLKGQPLRPSDRLTLSSQNRTLTIHGLQRDDIGPYECEVWNWGSQARSVPLKLTINYGPDQVEITQGPASGVVSTIEAMLNSSLTLYCRADSIPGARYQWTHEHSSKVLDGEQLSIEALRQEHQGIYSCTSSNDVTGLARSASVLVMVVGLQSSSMSPGAIAGIVIGILVAIALAIGLGYFLYSTKDRWTRRRSASDTTSSNTIPPTSVMQSTPESRHNKPMTVYDNTPKPEGEARGKKMWSLPRDSPEQFYEKKPPSAAPEGPRKPLPQIPKQPLMPPGPGRNEESNYEKLLNSNHSLYCKITPSA.

A signal peptide spans 1–30 (MELAGFHCCSWTVILLSALLPTTWRPPAAA). The Extracellular portion of the chain corresponds to 31 to 430 (HFIHRADLLS…LQSSSMSPGA (400 aa)). 4 Ig-like C2-type domains span residues 48-137 (PLAK…ASLT), 142-223 (PDPV…TNLS), 239-324 (PNIE…LKLT), and 329-415 (PDQV…ASVL). A disulfide bridge connects residues Cys72 and Cys120. Residues Asn78 and Asn102 are each glycosylated (N-linked (GlcNAc...) asparagine). 2 disulfide bridges follow: Cys259/Cys307 and Cys358/Cys399. Residue Asn289 is glycosylated (N-linked (GlcNAc...) asparagine). A helical membrane pass occupies residues 431-451 (IAGIVIGILVAIALAIGLGYF). Over 452–577 (LYSTKDRWTR…SLYCKITPSA (126 aa)) the chain is Cytoplasmic. The segment at 461-568 (RRRSASDTTS…YEKLLNSNHS (108 aa)) is disordered. The segment covering 474-484 (IPPTSVMQSTP) has biased composition (polar residues). Positions 516–526 (DSPEQFYEKKP) are enriched in basic and acidic residues. The segment covering 536-551 (KPLPQIPKQPLMPPGP) has biased composition (pro residues). Residues Tyr559 and Tyr570 each carry the phosphotyrosine modification.

Belongs to the immunoglobulin superfamily. CEA family. As to quaternary structure, interacts (via extracellular domain) with PTPRH (via extracellular domain); the interaction dephosphorylates CEACAM20. Interacts (phosphorylated form) with SYK (via SH2 domains); the interaction further enhances CEACAM20 phosphorylation. Phosphorylated on tyrosine residues by SYK, SRC and FYN in vitro. In terms of tissue distribution, strongly expressed in the small intestine and colon (at protein level). Minimal expression in other tissues (at protein level). Highly expressed in cecum, colon, ileum, jejunum, and testis, and also detected at lower levels in salivary gland and thymus.

The protein resides in the cell projection. Its subcellular location is the microvillus membrane. It localises to the apical cell membrane. In terms of biological role, together with the tyrosine-protein kinase SYK, enhances production of the cytokine CXCL8/IL-8 via the NFKB pathway and may thus have a role in the intestinal immune response. This chain is Cell adhesion molecule CEACAM20, found in Mus musculus (Mouse).